The following is a 211-amino-acid chain: Redox-sensing transcriptional repressor Rex (211 aa).

Residues 18–57 (LYYRFLENLHASGKQRVSSSELSEAVKVDSATIRRDFSYF) constitute a DNA-binding region (H-T-H motif). 92–97 (GVGNLG) contacts NAD(+).

This sequence belongs to the transcriptional regulatory Rex family. In terms of assembly, homodimer.

The protein localises to the cytoplasm. In terms of biological role, modulates transcription in response to changes in cellular NADH/NAD(+) redox state. The sequence is that of Redox-sensing transcriptional repressor Rex from Halalkalibacterium halodurans (strain ATCC BAA-125 / DSM 18197 / FERM 7344 / JCM 9153 / C-125) (Bacillus halodurans).